Here is a 258-residue protein sequence, read N- to C-terminus: Regulatory protein RecX (258 aa).

Belongs to the RecX family.

The protein resides in the cytoplasm. In terms of biological role, modulates RecA activity. The sequence is that of Regulatory protein RecX from Streptococcus pneumoniae serotype 19F (strain G54).